The primary structure comprises 371 residues: RNA polymerase sigma factor SigA (371 aa).

The sigma-70 factor domain-2 stretch occupies residues 137-207; it reads LAEANLRLVV…TRAIADQART (71 aa). Residues 161-164 carry the Interaction with polymerase core subunit RpoC motif; the sequence is DLIQ. The tract at residues 216–292 is sigma-70 factor domain-3; that stretch reads ETINKLVREQ…DEVIENPVDY (77 aa). The sigma-70 factor domain-4 stretch occupies residues 305–358; sequence VLDTLTDREENVLRLRFGLDDGKMRTLEDVGKVFDVTRERIRQIEAKALRKLRH. A DNA-binding region (H-T-H motif) is located at residues 331 to 350; that stretch reads LEDVGKVFDVTRERIRQIEA.

Belongs to the sigma-70 factor family. RpoD/SigA subfamily. In terms of assembly, interacts transiently with the RNA polymerase catalytic core.

The protein localises to the cytoplasm. In terms of biological role, sigma factors are initiation factors that promote the attachment of RNA polymerase to specific initiation sites and are then released. This sigma factor is the primary sigma factor during exponential growth. In Streptococcus mutans serotype c (strain ATCC 700610 / UA159), this protein is RNA polymerase sigma factor SigA.